A 1037-amino-acid polypeptide reads, in one-letter code: Outer dynein arm-docking complex subunit 2 (1037 aa).

Composition is skewed to basic and acidic residues over residues 316 to 334 (EEQQKDNQIFEKPKTEDGH) and 376 to 391 (SSIKDSQEEKQGKLEK). Disordered regions lie at residues 316 to 353 (EEQQKDNQIFEKPKTEDGHSSVAGSEKSKIEKISFGKS) and 376 to 439 (SSIK…ANAD). ARM repeat units lie at residues 477-516 (ETCQLAIRDVGGLEVLINLLDTDEVKCKIGSLKILKEISH), 518-557 (PQIRRNIVDLGGLPIMVNILDSPHKSLKCLSAETIANVAK), 528-570 (GGLP…QHGG), 615-654 (HSNKEAIRKAGGIPLLARLLKTSHENMLIPVVGTLQECAS), 656-695 (ENYRAAIKAERIIENLVKNLNSENEQLQEHCAMAIYQCAE), 739-778 (KENVIKFREYKAIETLVGLLTDQPEEVLVNVVGALGECCQ), 821-860 (PESMAIIDRLDGVRLLWSLLKNPHPDVKASAAWALCPCIE), 864-903 (DAGEMVRSFVGGLELVVNLLKSDNKEVLASVCAAITNIAK), 905-944 (QENLAVITDHGVVPLLSKLANTNNDKLRRHLAEAISRCCM), and 946-985 (GRNRVAFGEHKAVAPLVRYLKSNDTNVHRATAQALYQLSE). An N6-methyllysine modification is found at Lys-545.

As to quaternary structure, component of the outer dynein arm-docking complex along with ODAD1, ODAD3, and ODAD4. Interacts with CFAP61. As to expression, highly expressed in testis. In males, also detected at lower levels in lung, brain, liver and muscle. In females, detected in ovary.

It is found in the cytoplasm. The protein resides in the cytoskeleton. It localises to the cilium axoneme. The protein localises to the cilium basal body. Functionally, component of the outer dynein arm-docking complex (ODA-DC) that mediates outer dynein arms (ODA) binding onto the doublet microtubule. Involved in mediating assembly of both ODAs and their axonemal docking complex onto ciliary microtubules. This is Outer dynein arm-docking complex subunit 2 from Mus musculus (Mouse).